We begin with the raw amino-acid sequence, 247 residues long: Adenosine 5'-phosphosulfate reductase (247 aa).

[4Fe-4S] cluster is bound by residues Cys-133, Cys-134, Cys-216, and Cys-219. Residues Lys-222 to Ser-247 are disordered. The active-site Nucleophile; cysteine thiosulfonate intermediate is Cys-242.

The protein belongs to the PAPS reductase family. CysH subfamily. Requires [4Fe-4S] cluster as cofactor.

It is found in the cytoplasm. The catalysed reaction is [thioredoxin]-disulfide + sulfite + AMP + 2 H(+) = adenosine 5'-phosphosulfate + [thioredoxin]-dithiol. The protein operates within sulfur metabolism; hydrogen sulfide biosynthesis; sulfite from sulfate. Functionally, catalyzes the formation of sulfite from adenosine 5'-phosphosulfate (APS) using thioredoxin as an electron donor. In Rhodococcus erythropolis (strain PR4 / NBRC 100887), this protein is Adenosine 5'-phosphosulfate reductase.